We begin with the raw amino-acid sequence, 161 residues long: Globin CTT-VIIB-6 (161 aa).

Positions 1-16 (MKFFAVLALCIVGAIA) are cleaved as a signal peptide. A Globin domain is found at 18 to 161 (PLTADEASLV…NTFAIVVPRL (144 aa)). Residues His-76 and His-111 each contribute to the heme b site.

It belongs to the globin family. Homodimer.

In Chironomus thummi thummi (Midge), this protein is Globin CTT-VIIB-6 (CTT-7B6).